Reading from the N-terminus, the 1478-residue chain is FYVE and coiled-coil domain-containing protein 1 (1478 aa).

Position 2 is an N-acetylalanine (A2). A coiled-coil region spans residues 4-33 (TNAESQLQRIIRDLQDAVTELSKEFQEAGE). An RUN domain is found at 36 to 169 (TDDSTSLHKF…VQFDLASRGF (134 aa)). S196 bears the Phosphoserine mark. Residues 225–280 (NNEALEGFDEMRLELDQLEVREKQLRERMQQLDRENQELRAAVSQQGEQLQTERER) are a coiled coil. S342 is modified (phosphoserine). The residue at position 381 (T381) is a Phosphothreonine. 2 coiled-coil regions span residues 394–555 (SDAA…MLER) and 596–1151 (QEAQ…KDAL). The segment at 586-613 (GKPEEEQRGLQEAQLDDTKVQEGSQEEE) is disordered. S878 carries the phosphoserine modification. The FYVE-type zinc-finger motif lies at 1173–1231 (DTEANHCLDCKREFSWMVRRHHCRICGRIFCYYCCNNYVLSKHGGKKERCCRACFQKLS). Residues C1179, C1182, C1195, C1198, C1203, C1206, C1223, and C1226 each coordinate Zn(2+). Residues 1231 to 1261 (SEGPGSPDSSGSGTSQGEPSPALSPASPGPQ) are compositionally biased toward low complexity. 2 disordered regions span residues 1231–1277 (SEGP…PPDD) and 1294–1332 (SGSS…DMPV). Polar residues-rich tracts occupy residues 1294 to 1305 (SGSSLPETPTET) and 1314 to 1324 (EQDTTSTSLTP). The region spanning 1337-1466 (EICLLKSGEL…SKKVFYHLTV (130 aa)) is the GOLD domain.

Can form homodimers. Interacts (via C-terminus) with MAP1LC3B. Interacts with RAB7A; the interaction with RAB7A induces FYCO1 recruitment to late endosomal/lysosomal compartments. Interacts with MAP1LC3B. Expressed in heart and skeletal muscle.

The protein resides in the cytoplasmic vesicle. It localises to the autophagosome. The protein localises to the endosome. Its subcellular location is the lysosome. Its function is as follows. May mediate microtubule plus end-directed vesicle transport. The chain is FYVE and coiled-coil domain-containing protein 1 (FYCO1) from Homo sapiens (Human).